We begin with the raw amino-acid sequence, 130 residues long: Type VII secretion system extracellular protein C (130 aa).

The protein belongs to the EsxC family. In terms of assembly, forms both homodimers and heterodimers with EsxA. Homodimerization is calcium-dependent.

It localises to the secreted. The protein is Type VII secretion system extracellular protein C of Staphylococcus aureus (strain USA300).